A 96-amino-acid polypeptide reads, in one-letter code: RNA-binding protein Hfq (96 aa).

The region spanning 9 to 68 is the Sm domain; that stretch reads DPYLNALRRERIPVSIYLVNGIKLQGQIESFDQFVILLKNTVNQMVYKHAISTVVPARSV. The interval 67–96 is disordered; that stretch reads SVSHHNNSNNSNQQNYQQEQQTDSNVEKAE. Low complexity predominate over residues 72–87; sequence NNSNNSNQQNYQQEQQ.

Belongs to the Hfq family. Homohexamer.

RNA chaperone that binds small regulatory RNA (sRNAs) and mRNAs to facilitate mRNA translational regulation in response to envelope stress, environmental stress and changes in metabolite concentrations. Also binds with high specificity to tRNAs. This Pasteurella multocida (strain Pm70) protein is RNA-binding protein Hfq.